Reading from the N-terminus, the 232-residue chain is Flagellar L-ring protein (232 aa).

The signal sequence occupies residues 1 to 21; sequence MQKNAAHTYAISSLLVLSLTG. Cys22 is lipidated: N-palmitoyl cysteine. A lipid anchor (S-diacylglycerol cysteine) is attached at Cys22.

This sequence belongs to the FlgH family. As to quaternary structure, the basal body constitutes a major portion of the flagellar organelle and consists of four rings (L,P,S, and M) mounted on a central rod.

It is found in the cell outer membrane. It localises to the bacterial flagellum basal body. Functionally, assembles around the rod to form the L-ring and probably protects the motor/basal body from shearing forces during rotation. The polypeptide is Flagellar L-ring protein (Shigella dysenteriae serotype 1 (strain Sd197)).